We begin with the raw amino-acid sequence, 183 residues long: uncharacterized protein (183 aa).

This sequence belongs to the asfivirus S183L family.

This is an uncharacterized protein from Ornithodoros (relapsing fever ticks).